The chain runs to 281 residues: E3 ubiquitin-protein ligase MARCHF5 (281 aa).

An RING-CH-type zinc finger spans residues leucine 9–valine 78. Zn(2+) contacts are provided by cysteine 17, cysteine 20, cysteine 36, cysteine 38, histidine 46, cysteine 49, cysteine 68, and cysteine 71. 4 helical membrane passes run phenylalanine 102–valine 122, proline 142–isoleucine 162, isoleucine 212–serine 232, and threonine 241–glutamine 261.

Its subcellular location is the mitochondrion outer membrane. It localises to the endoplasmic reticulum membrane. The catalysed reaction is S-ubiquitinyl-[E2 ubiquitin-conjugating enzyme]-L-cysteine + [acceptor protein]-L-lysine = [E2 ubiquitin-conjugating enzyme]-L-cysteine + N(6)-ubiquitinyl-[acceptor protein]-L-lysine.. Its pathway is protein modification; protein ubiquitination. Mitochondrial E3 ubiquitin-protein ligase that plays a crucial role in the control of mitochondrial morphology by acting as a positive regulator of mitochondrial fission. May play a role in the prevention of cell senescence acting as a regulator of mitochondrial quality control. The protein is E3 ubiquitin-protein ligase MARCHF5 (MARCHF5) of Gallus gallus (Chicken).